The following is a 206-amino-acid chain: Pyridoxine/pyridoxamine 5'-phosphate oxidase (206 aa).

Residues 55–60 (RVVLLK), 70–71 (YT), R76, K77, and Q99 contribute to the FMN site. Position 60 (K60) interacts with substrate. Substrate is bound by residues Y117, R121, and S125. FMN is bound by residues 134 to 135 (QS) and W179. 185 to 187 (RLH) provides a ligand contact to substrate. Residue R189 participates in FMN binding.

The protein belongs to the pyridoxamine 5'-phosphate oxidase family. As to quaternary structure, homodimer. FMN is required as a cofactor.

It catalyses the reaction pyridoxamine 5'-phosphate + O2 + H2O = pyridoxal 5'-phosphate + H2O2 + NH4(+). The catalysed reaction is pyridoxine 5'-phosphate + O2 = pyridoxal 5'-phosphate + H2O2. Its pathway is cofactor metabolism; pyridoxal 5'-phosphate salvage; pyridoxal 5'-phosphate from pyridoxamine 5'-phosphate: step 1/1. It functions in the pathway cofactor metabolism; pyridoxal 5'-phosphate salvage; pyridoxal 5'-phosphate from pyridoxine 5'-phosphate: step 1/1. Catalyzes the oxidation of either pyridoxine 5'-phosphate (PNP) or pyridoxamine 5'-phosphate (PMP) into pyridoxal 5'-phosphate (PLP). This chain is Pyridoxine/pyridoxamine 5'-phosphate oxidase, found in Myxococcus xanthus (strain DK1622).